Consider the following 122-residue polypeptide: Large ribosomal subunit protein uL14 (122 aa).

This sequence belongs to the universal ribosomal protein uL14 family. As to quaternary structure, part of the 50S ribosomal subunit. Forms a cluster with proteins L3 and L19. In the 70S ribosome, L14 and L19 interact and together make contacts with the 16S rRNA in bridges B5 and B8.

Binds to 23S rRNA. Forms part of two intersubunit bridges in the 70S ribosome. This chain is Large ribosomal subunit protein uL14, found in Ralstonia nicotianae (strain ATCC BAA-1114 / GMI1000) (Ralstonia solanacearum).